The sequence spans 45 residues: uncharacterized protein (45 aa).

This is an uncharacterized protein from Treponema pallidum (strain Nichols).